The primary structure comprises 271 residues: uncharacterized protein (271 aa).

The region spanning 24–124 is the AB hydrolase-1 domain; sequence PIILLVHGGG…QVHVMIPHEP (101 aa).

It belongs to the AB hydrolase superfamily.

This is an uncharacterized protein from Bacillus subtilis (strain 168).